The primary structure comprises 151 residues: MRKVQEIEDLLAPVAAREKIEIVDVQYSKKAGDWVARIFIDKDSGVTISDCENISCIFGAFLDESDILKDSYVLEISSPGFKRVLKSEKSFRRFIGSKTRIRTFKPINNQRNFLGTLLNFDDGRIKINDVTNGVVEIEFSDIRKANIEADI.

Belongs to the RimP family.

The protein resides in the cytoplasm. Required for maturation of 30S ribosomal subunits. This is Ribosome maturation factor RimP from Endomicrobium trichonymphae.